A 66-amino-acid chain; its full sequence is Large ribosomal subunit protein bL35 (66 aa).

Residues 1 to 26 (MPKMKTHRGGAKRVKRTGSGKLKRSR) show a composition bias toward basic residues. Disordered stretches follow at residues 1–28 (MPKM…SRAY) and 36–55 (KSTK…KGDQ).

The protein belongs to the bacterial ribosomal protein bL35 family.

The protein is Large ribosomal subunit protein bL35 of Macrococcus caseolyticus (strain JCSC5402) (Macrococcoides caseolyticum).